The following is a 327-amino-acid chain: uncharacterized protein (327 aa).

This is an uncharacterized protein from Lepidoptera (butterflies and moths).